Consider the following 494-residue polypeptide: Probable malate:quinone oxidoreductase 3 (494 aa).

The protein belongs to the MQO family. FAD serves as cofactor.

It carries out the reaction (S)-malate + a quinone = a quinol + oxaloacetate. It participates in carbohydrate metabolism; tricarboxylic acid cycle; oxaloacetate from (S)-malate (quinone route): step 1/1. The chain is Probable malate:quinone oxidoreductase 3 from Staphylococcus epidermidis (strain ATCC 35984 / DSM 28319 / BCRC 17069 / CCUG 31568 / BM 3577 / RP62A).